A 222-amino-acid polypeptide reads, in one-letter code: 3-dehydroquinate dehydratase (222 aa).

3-dehydroquinate contacts are provided by residues 29–31 (ELR) and Arg-55. His-112 (proton donor/acceptor) is an active-site residue. Lys-139 (schiff-base intermediate with substrate) is an active-site residue. Positions 178, 199, and 203 each coordinate 3-dehydroquinate.

The protein belongs to the type-I 3-dehydroquinase family. As to quaternary structure, homodimer.

The catalysed reaction is 3-dehydroquinate = 3-dehydroshikimate + H2O. The protein operates within metabolic intermediate biosynthesis; chorismate biosynthesis; chorismate from D-erythrose 4-phosphate and phosphoenolpyruvate: step 3/7. Its function is as follows. Involved in the third step of the chorismate pathway, which leads to the biosynthesis of aromatic amino acids. Catalyzes the cis-dehydration of 3-dehydroquinate (DHQ) and introduces the first double bond of the aromatic ring to yield 3-dehydroshikimate. The polypeptide is 3-dehydroquinate dehydratase (Dehalococcoides mccartyi (strain ATCC BAA-2266 / KCTC 15142 / 195) (Dehalococcoides ethenogenes (strain 195))).